The sequence spans 119 residues: Polyhedrin (119 aa).

Belongs to the polyhedrin family.

Major component of the virus occlusion bodies, which are large proteinaceous structures (polyhedra), that protect the virus from the outside environment for extended periods until they are ingested by insect larvae. This Antheraea pernyi nuclear polyhedrosis virus (ApNPV) protein is Polyhedrin (PH).